The following is a 779-amino-acid chain: Angiomotin-like protein 2 (779 aa).

Disordered stretches follow at residues 41–215 (GGAG…QYPH) and 263–308 (QYLQ…TSGS). Basic and acidic residues-rich tracts occupy residues 100–112 (KGEELPTYEEAKA) and 141–152 (RRQDEALRELRH). The required for interaction with CDH5 stretch occupies residues 101-307 (GEELPTYEEA…SAQASSATSG (207 aa)). Residue Tyr107 is modified to Phosphotyrosine; by FGFR1. Low complexity predominate over residues 160 to 169 (ERLLQLSLER). Over residues 177–193 (HMSSSHSFPQLARNQQG) the composition is skewed to polar residues. A compositionally biased stretch (pro residues) spans 196–213 (LRGPPAEGPESRGPPPQY). Residues 220 to 307 (HETTTAVTDP…SAQASSATSG (88 aa)) are required for interaction with CDH1. The segment covering 298 to 308 (SAQASSATSGS) has biased composition (low complexity). Residues 308–581 (SAHLAQMEAV…KYLEERAMRQ (274 aa)) are a coiled coil. Residues Lys347 and Lys408 each participate in a glycyl lysine isopeptide (Lys-Gly) (interchain with G-Cter in ubiquitin) cross-link. Disordered regions lie at residues 522-543 (RAQQRQAGAPGGSSGSGGSPEL) and 679-753 (TQGW…GCSS). The span at 530 to 539 (APGGSSGSGG) shows a compositional bias: gly residues. Composition is skewed to polar residues over residues 680–690 (QGWQGLSSSER) and 725–740 (DGSTQTEGPPDSTSTC). Phosphoserine is present on residues Ser759 and Ser762. The PDZ-binding signature appears at 776–779 (EILI).

This sequence belongs to the angiomotin family. Part of a complex composed of AMOTL2, MAGI1 and CDH5, within the complex AMOTL2 acts as a scaffold protein for the interaction of MAGI1 with CDH5. The complex is required for coupling actin fibers to cell junctions in endothelial cells. Within the complex AMOTL2 (via its N-terminus) interacts with CDH5. Interacts (via N-terminus) with MAGI1. Interacts (via N-terminus) with ACTB; the interaction facilitates binding of cell junction complexes to actin fibers in endothelial cells. Interacts with CDH1; the interaction may facilitate binding of radial actin fibers to cell junction complexes. Interacts with SRC. Interacts with YAP1; the interaction is required for ubiquitination of AMOTL2 and localization of YAP1 to tight junctions. Interacts with WWP1; the interaction facilitates WWP1 interaction with the Crumbs complex and subsequent WWP1 translocation to the plasma membrane. WWP1 interaction with the Crumbs complex promotes WWP1 monoubiquitination of AMOTL2 which subsequently activates the Hippo signaling pathway. When ubiquitinated interacts with LATS2 (via UBA domain); the interaction promotes LATS2 phosphorylation of YAP1. Interacts (via PPXY motif) with WWTR1/TAZ (via WW domain); the interaction promotes WWTR1/TAZ localization to the cytoplasm and thereby inhibition of its transcriptional properties. Interacts with PHLDB2; interaction may facilitate PHLDB2 localization to the myotube podosome cortex that surrounds the core. In terms of processing, monoubiquitinated at Lys-347 and Lys-408 by Crumbs complex-bound WWP1. De-ubiquitinated at Lys-347 and Lys-408 by USP9X; the interaction may be promoted by cell contact inhibition. Deubiquitination of AMOTL2 negatively regulates Hippo signaling activation. Post-translationally, phosphorylation at Tyr-107 is necessary for efficient binding to SRC and synergistically functioning with SRC to activate the downstream MAPK pathway.

It localises to the recycling endosome. Its subcellular location is the cytoplasm. It is found in the cell projection. The protein localises to the podosome. The protein resides in the cell junction. Its function is as follows. Regulates the translocation of phosphorylated SRC to peripheral cell-matrix adhesion sites. Required for proper architecture of actin filaments. Plays a role in coupling actin fibers to cell junctions in endothelial cells and is therefore required for correct endothelial cell morphology via facilitating transcellular transmission of mechanical force resulting in endothelial cell elongation. Required for the anchoring of radial actin fibers to CDH1 junction complexes at the cell membrane which facilitates organization of radial actin fiber structure and cellular response to contractile forces. This contributes to maintenance of cell area, size, shape, epithelial sheet organization and trophectoderm cell properties that facilitate blastocyst zona hatching. Inhibits the Wnt/beta-catenin signaling pathway, probably by recruiting CTNNB1 to recycling endosomes and hence preventing its translocation to the nucleus. Participates in angiogenesis. Activates the Hippo signaling pathway in response to cell contact inhibition via interaction with and ubiquitination by Crumbs complex-bound WWP1. Ubiquitinated AMOTL2 then interacts with LATS2 which in turn phosphorylates YAP1, excluding it from the nucleus and localizing it to the cytoplasm and tight junctions, therefore ultimately repressing YAP1-driven transcription of target genes. Acts to inhibit WWTR1/TAZ transcriptional coactivator activity via sequestering WWTR1/TAZ in the cytoplasm and at tight junctions. Regulates the size and protein composition of the podosome cortex and core at myofibril neuromuscular junctions. Selectively promotes FGF-induced MAPK activation through SRC. May play a role in the polarity, proliferation and migration of endothelial cells. The chain is Angiomotin-like protein 2 from Homo sapiens (Human).